The primary structure comprises 426 residues: MIEIIEVQAREILDSRGNPTVEVDVTLSGGATGRAAVPSGASTGTREALELRDTRKKRYLGKGVEKAVENVNTLIGPVLYGMPADEQFMVDSTMIGLDGTANKSKLGANAILGVSMAVARAAADAYELPLYRYLGGIHAKHLPMPMMNIVNGGAHAANSLDIQEFMIIPVGGKTIAECVRMGAEVFHTLKKLLKAKGFATAVGDEGGFAPDLESNEAAIGFIMEAIKKAGYRPGRDVGIALDAAASEFYEKGKYVLKGEGKKLSSKQMVDYYENLIDKYPILSIEDGLAEQDWDNWVMMTDRLGNTTQIVGDDVFVTNPAIFEKGIREGLANSILIKLNQIGTVSETLQAIDMAKQAGYTTVISHRSGETEDAFIADLAVGVNGGQIKTGSLSRSDRIAKYNQLIRIEEALGAGAVLSNDFTAVVR.

Position 163 (glutamine 163) interacts with (2R)-2-phosphoglycerate. The active-site Proton donor is glutamate 205. Residues aspartate 242, glutamate 285, and aspartate 312 each coordinate Mg(2+). The (2R)-2-phosphoglycerate site is built by lysine 337, arginine 366, serine 367, and lysine 388. Lysine 337 serves as the catalytic Proton acceptor.

It belongs to the enolase family. It depends on Mg(2+) as a cofactor.

The protein localises to the cytoplasm. The protein resides in the secreted. It localises to the cell surface. It catalyses the reaction (2R)-2-phosphoglycerate = phosphoenolpyruvate + H2O. It functions in the pathway carbohydrate degradation; glycolysis; pyruvate from D-glyceraldehyde 3-phosphate: step 4/5. Its function is as follows. Catalyzes the reversible conversion of 2-phosphoglycerate (2-PG) into phosphoenolpyruvate (PEP). It is essential for the degradation of carbohydrates via glycolysis. This Desulfosudis oleivorans (strain DSM 6200 / JCM 39069 / Hxd3) (Desulfococcus oleovorans) protein is Enolase.